The following is a 413-amino-acid chain: Tyrosine--tRNA ligase (413 aa).

The 'HIGH' region signature appears at 59-68; that stretch reads PTAPDIHLGH. The 'KMSKS' region signature appears at 243–247; that stretch reads KMSKS. Position 246 (K246) interacts with ATP. Residues 351–411 enclose the S4 RNA-binding domain; that stretch reads LAIGQLLKQA…GKRRFARVTL (61 aa).

This sequence belongs to the class-I aminoacyl-tRNA synthetase family. TyrS type 2 subfamily. As to quaternary structure, homodimer.

It localises to the cytoplasm. The enzyme catalyses tRNA(Tyr) + L-tyrosine + ATP = L-tyrosyl-tRNA(Tyr) + AMP + diphosphate + H(+). Functionally, catalyzes the attachment of tyrosine to tRNA(Tyr) in a two-step reaction: tyrosine is first activated by ATP to form Tyr-AMP and then transferred to the acceptor end of tRNA(Tyr). The protein is Tyrosine--tRNA ligase of Burkholderia thailandensis (strain ATCC 700388 / DSM 13276 / CCUG 48851 / CIP 106301 / E264).